The sequence spans 183 residues: Small ribosomal subunit protein uS4c (183 aa).

The region spanning 82–143 (MRLDNILFRL…KQRSKALIQN (62 aa)) is the S4 RNA-binding domain.

Belongs to the universal ribosomal protein uS4 family. As to quaternary structure, part of the 30S ribosomal subunit. Contacts protein S5. The interaction surface between S4 and S5 is involved in control of translational fidelity.

It is found in the plastid. The protein localises to the chloroplast. Functionally, one of the primary rRNA binding proteins, it binds directly to 16S rRNA where it nucleates assembly of the body of the 30S subunit. Its function is as follows. With S5 and S12 plays an important role in translational accuracy. The protein is Small ribosomal subunit protein uS4c (rps4) of Freesia sp. (strain Lejeune 1997).